The following is a 273-amino-acid chain: Bis(5'-nucleosyl)-tetraphosphatase, symmetrical (273 aa).

It belongs to the Ap4A hydrolase family.

It catalyses the reaction P(1),P(4)-bis(5'-adenosyl) tetraphosphate + H2O = 2 ADP + 2 H(+). In terms of biological role, hydrolyzes diadenosine 5',5'''-P1,P4-tetraphosphate to yield ADP. The sequence is that of Bis(5'-nucleosyl)-tetraphosphatase, symmetrical (apaH) from Buchnera aphidicola subsp. Schizaphis graminum (strain Sg).